The primary structure comprises 341 residues: Calcium-binding protein 39 (341 aa).

This sequence belongs to the Mo25 family. In terms of assembly, component of a trimeric complex composed of STK11/LKB1, STRAD (STRADA or STRADB) and CAB39/MO25 (CAB39/MO25alpha or CAB39L/MO25beta): the complex tethers STK11/LKB1 in the cytoplasm and stimulates its catalytic activity.

Its subcellular location is the cytoplasm. Functionally, component of a complex that binds and activates STK11/LKB1. In the complex, required to stabilize the interaction between CAB39/MO25 (CAB39/MO25alpha or CAB39L/MO25beta) and STK11/LKB1. The polypeptide is Calcium-binding protein 39 (CAB39) (Bos taurus (Bovine)).